The primary structure comprises 579 residues: Peptidyl-prolyl cis-trans isomerase-like 2 (579 aa).

The U-box domain occupies arginine 42 to lysine 115. The tract at residues alanine 227–alanine 261 is disordered. A compositionally biased stretch (polar residues) spans threonine 250–histidine 259. The 160-residue stretch at glutamine 311–isoleucine 470 folds into the PPIase cyclophilin-type domain. Residues glutamate 555–aspartate 579 are disordered.

The protein belongs to the cyclophilin-type PPIase family. PPIL2 subfamily.

It localises to the nucleus. It carries out the reaction [protein]-peptidylproline (omega=180) = [protein]-peptidylproline (omega=0). The catalysed reaction is S-ubiquitinyl-[E2 ubiquitin-conjugating enzyme]-L-cysteine + [acceptor protein]-L-lysine = [E2 ubiquitin-conjugating enzyme]-L-cysteine + N(6)-ubiquitinyl-[acceptor protein]-L-lysine.. The protein operates within protein modification; protein ubiquitination. In terms of biological role, may catalyze the cis-trans isomerization of proline imidic peptide bonds in oligopeptides thereby assisting the folding of proteins. May also function as a chaperone, playing a role in intracellular transport of proteins. May also have a protein ubiquitin ligase activity acting as an E3 ubiquitin protein ligase or as a ubiquitin-ubiquitin ligase promoting elongation of ubiquitin chains on proteins. The sequence is that of Peptidyl-prolyl cis-trans isomerase-like 2 (cyp8) from Aspergillus fumigatus (strain ATCC MYA-4609 / CBS 101355 / FGSC A1100 / Af293) (Neosartorya fumigata).